We begin with the raw amino-acid sequence, 443 residues long: Methyl-coenzyme M reductase II subunit beta (443 aa).

Tyr367 contributes to the coenzyme M binding site. Residue Gly369 participates in coenzyme B binding.

It belongs to the methyl-coenzyme M reductase beta subunit family. As to quaternary structure, MCR is a hexamer of two alpha, two beta, and two gamma chains, forming a dimer of heterotrimers. Coenzyme F430 serves as cofactor.

The enzyme catalyses coenzyme B + methyl-coenzyme M = methane + coenzyme M-coenzyme B heterodisulfide. The protein operates within one-carbon metabolism; methyl-coenzyme M reduction; methane from methyl-coenzyme M: step 1/1. Component of the methyl-coenzyme M reductase (MCR) I that catalyzes the reductive cleavage of methyl-coenzyme M (CoM-S-CH3 or 2-(methylthio)ethanesulfonate) using coenzyme B (CoB or 7-mercaptoheptanoylthreonine phosphate) as reductant which results in the production of methane and the mixed heterodisulfide of CoB and CoM (CoM-S-S-CoB). This is the final step in methanogenesis. The protein is Methyl-coenzyme M reductase II subunit beta of Methanothermobacter marburgensis (strain ATCC BAA-927 / DSM 2133 / JCM 14651 / NBRC 100331 / OCM 82 / Marburg) (Methanobacterium thermoautotrophicum).